The sequence spans 221 residues: Eukaryotic translation initiation factor 3 subunit K (221 aa).

The PCI domain occupies 46-207 (YDLEANLACL…NIKTKHITEK (162 aa)).

Belongs to the eIF-3 subunit K family. In terms of assembly, component of the eukaryotic translation initiation factor 3 (eIF-3) complex.

The protein resides in the cytoplasm. Its function is as follows. Component of the eukaryotic translation initiation factor 3 (eIF-3) complex, which is involved in protein synthesis of a specialized repertoire of mRNAs and, together with other initiation factors, stimulates binding of mRNA and methionyl-tRNAi to the 40S ribosome. The eIF-3 complex specifically targets and initiates translation of a subset of mRNAs involved in cell proliferation. This Aedes aegypti (Yellowfever mosquito) protein is Eukaryotic translation initiation factor 3 subunit K.